The following is a 468-amino-acid chain: MGRGWGFLFGLLGAVWLLSSGHGEEQPPETAAQRCFCQVSGYLDDCTCDVETIDRFNNYRLFPRLQKLLESDYFRYYKVNLKRPCPFWNDISQCGRRDCAVKPCQSDEVPDGIKSASYKYSEEANNLIEECEQAERLGAVDESLSEETQKAVLQWTKHDDSSDNFCEADDIQSPEAEYVDLLLNPERYTGYKGPDAWKIWNVIYEENCFKPQTIKRPLNPLASGQGTSEENTFYSWLEGLCVEKRAFYRLISGLHASINVHLSARYLLQETWLEKKWGHNITEFQQRFDGILTEGEGPRRLKNLYFLYLIELRALSKVLPFFERPDFQLFTGNKIQDEENKMLLLEILHEIKSFPLHFDENSFFAGDKKEAHKLKEDFRLHFRNISRIMDCVGCFKCRLWGKLQTQGLGTALKILFSEKLIANMPESGPSYEFHLTRQEIVSLFNAFGRISTSVKELENFRNLLQNIH.

Residues 1-23 form the signal peptide; sequence MGRGWGFLFGLLGAVWLLSSGHG. Cystine bridges form between C35–C48, C37–C46, C85–C391, C94–C99, C94–C131, C99–C104, C208–C241, and C394–C397. A phosphoserine mark is found at S106 and S143. A Phosphoserine; by FAM20C modification is found at S145. 3 residues coordinate FAD: R187, T189, and W200. Positions 252 and 255 each coordinate FAD. An N-linked (GlcNAc...) asparagine glycan is attached at N280. The FAD site is built by R287 and R300. A glycan (N-linked (GlcNAc...) asparagine) is linked at N384.

Belongs to the EROs family. Predominantly monomer. May function both as a monomer and a homodimer. Interacts with PDILT. Interacts with ERP44; the interaction results in retention of ERO1A in the endoplasmic reticulum. Requires FAD as cofactor. In terms of processing, N-glycosylated. Post-translationally, the Cys-94/Cys-99 and Cys-394/Cys-397 disulfide bonds constitute the redox-active center. The Cys-94/Cys-99 disulfide bond may accept electron from P4HB and funnel them to the active site disulfide Cys-394/Cys-397. The regulatory Cys-99/Cys-104 disulfide bond stabilizes the other regulatory bond Cys-94/Cys-131. Phosphorylated on Ser-145 by FAM20C in the Golgi which increases its enzymatic activity. Phosphorylation is induced by lactation. It is also induced by hypoxia and reductive stress. In terms of tissue distribution, widely expressed at low level. Expressed at high level in upper digestive tract. Highly expressed in esophagus. Weakly expressed in stomach and duodenum.

Its subcellular location is the endoplasmic reticulum membrane. It is found in the golgi apparatus lumen. The protein resides in the secreted. The protein localises to the cell projection. It localises to the dendrite. Its activity is regulated as follows. Enzyme activity is tightly regulated to prevent the accumulation of reactive oxygen species in the endoplasmic reticulum. Reversibly down-regulated by the formation of disulfide bonds between the active site Cys-94 and Cys-131, and between Cys-99 and Cys-104. Glutathione may be required to regulate its activity in the endoplasmic reticulum. Its function is as follows. Oxidoreductase involved in disulfide bond formation in the endoplasmic reticulum. Efficiently reoxidizes P4HB/PDI, the enzyme catalyzing protein disulfide formation, in order to allow P4HB to sustain additional rounds of disulfide formation. Following P4HB reoxidation, passes its electrons to molecular oxygen via FAD, leading to the production of reactive oxygen species (ROS) in the cell. Required for the proper folding of immunoglobulins. Plays an important role in ER stress-induced, CHOP-dependent apoptosis by activating the inositol 1,4,5-trisphosphate receptor IP3R1. Involved in the release of the unfolded cholera toxin from reduced P4HB/PDI in case of infection by V.cholerae, thereby playing a role in retrotranslocation of the toxin. The chain is ERO1-like protein alpha from Homo sapiens (Human).